A 300-amino-acid polypeptide reads, in one-letter code: Dihydroorotate dehydrogenase B (NAD(+)), catalytic subunit (300 aa).

FMN is bound by residues Ser-20 and 44–45; that span reads KG. Substrate-binding positions include Lys-44 and 68–72; that span reads NSVGL. Residues Asn-98 and Asn-124 each contribute to the FMN site. Position 124 (Asn-124) interacts with substrate. Cys-127 (nucleophile) is an active-site residue. 2 residues coordinate FMN: Lys-162 and Ile-188. 189–190 provides a ligand contact to substrate; that stretch reads NT. Residues Gly-214, 240–241, and 262–263 each bind FMN; these read GG and GT.

The protein belongs to the dihydroorotate dehydrogenase family. Type 1 subfamily. Heterotetramer of 2 PyrK and 2 PyrD type B subunits. Requires FMN as cofactor.

The protein localises to the cytoplasm. The catalysed reaction is (S)-dihydroorotate + NAD(+) = orotate + NADH + H(+). The protein operates within pyrimidine metabolism; UMP biosynthesis via de novo pathway; orotate from (S)-dihydroorotate (NAD(+) route): step 1/1. Catalyzes the conversion of dihydroorotate to orotate with NAD(+) as electron acceptor. The sequence is that of Dihydroorotate dehydrogenase B (NAD(+)), catalytic subunit (pyrD) from Caldicellulosiruptor saccharolyticus (strain ATCC 43494 / DSM 8903 / Tp8T 6331).